The chain runs to 277 residues: Small ribosomal subunit protein uS2 (277 aa).

Residues 247–277 (LSAFESSQDDESDEENREEDLLAKKFDGEAN) form a disordered region. Positions 253 to 264 (SQDDESDEENRE) are enriched in acidic residues. The segment covering 265 to 277 (EDLLAKKFDGEAN) has biased composition (basic and acidic residues).

Belongs to the universal ribosomal protein uS2 family.

This Chlamydia pneumoniae (Chlamydophila pneumoniae) protein is Small ribosomal subunit protein uS2 (rpsB).